We begin with the raw amino-acid sequence, 461 residues long: MDLSAAAALCLWLLSACRPRDGLEAAAVLRAAGAGPAWSPGGGGGGRTLARAPGPSALQAAAVPGPRAVRRAAGSGFRNGSVVPHHFMMSLYRSLAGRAPVAAASGHGRVDTITGFTDQATQDETAAAEPGQSFLFDVSSLSEADEVVNAELRVLRRRSPEPDRDSATLLPRLLLSTCPDEAGTAHLLHSRAAEPLGGARWEAFDVTDAVQSHRRWPRASRKFCLVLRAVTASESSPLALRRLGFGWPGGGDGGGTAAEERALLVISSRTQRKESLFREIRAQARALRAAAEPPPDPGPGAGSRKANLGGRRRRRTALAGTRGAQGSGGGGGGGGGGGGGGGGGGGGAGRGHGRRGRSRCSRKSLHVDFKELGWDDWIIAPLDYEAYHCEGVCDFPLRSHLEPTNHAIIQTLLNSMAPDAAPASCCVPARLSPISILYIDAANNVVYKQYEDMVVEACGCR.

Positions 1–19 (MDLSAAAALCLWLLSACRP) are cleaved as a signal peptide. A propeptide spanning residues 20-315 (RDGLEAAAVL…ANLGGRRRRR (296 aa)) is cleaved from the precursor. Residue Asn79 is glycosylated (N-linked (GlcNAc...) asparagine). Positions 287 to 360 (LRAAAEPPPD…GHGRRGRSRC (74 aa)) are disordered. Residues 323 to 350 (GAQGSGGGGGGGGGGGGGGGGGGGGAGR) show a composition bias toward gly residues. Residues 351 to 360 (GHGRRGRSRC) are compositionally biased toward basic residues. Intrachain disulfides connect Cys360-Cys426, Cys389-Cys458, and Cys393-Cys460.

It belongs to the TGF-beta family. In terms of assembly, homodimer; disulfide-linked.

It is found in the secreted. This chain is Growth/differentiation factor 7 (Gdf7), found in Mus musculus (Mouse).